The primary structure comprises 430 residues: Serine hydroxymethyltransferase (430 aa).

120-122 provides a ligand contact to (6S)-5,6,7,8-tetrahydrofolate; it reads GHI. An N6-(pyridoxal phosphate)lysine modification is found at lysine 226.

This sequence belongs to the SHMT family. In terms of assembly, homodimer. Pyridoxal 5'-phosphate is required as a cofactor.

It is found in the cytoplasm. Its pathway is amino-acid biosynthesis; glycine biosynthesis; glycine from L-serine: step 1/1. Its function is as follows. Catalyzes the reversible interconversion of serine and glycine with a modified folate serving as the one-carbon carrier. Also exhibits a pteridine-independent aldolase activity toward beta-hydroxyamino acids, producing glycine and aldehydes, via a retro-aldol mechanism. The chain is Serine hydroxymethyltransferase from Pyrobaculum islandicum (strain DSM 4184 / JCM 9189 / GEO3).